The following is a 203-amino-acid chain: Large ribosomal subunit protein bL25 (203 aa).

The protein belongs to the bacterial ribosomal protein bL25 family. CTC subfamily. Part of the 50S ribosomal subunit; part of the 5S rRNA/L5/L18/L25 subcomplex. Contacts the 5S rRNA. Binds to the 5S rRNA independently of L5 and L18.

Functionally, this is one of the proteins that binds to the 5S RNA in the ribosome where it forms part of the central protuberance. This Pseudomonas syringae pv. tomato (strain ATCC BAA-871 / DC3000) protein is Large ribosomal subunit protein bL25.